The sequence spans 297 residues: Phosphoribosylaminoimidazole-succinocarboxamide synthase (297 aa).

Belongs to the SAICAR synthetase family.

The catalysed reaction is 5-amino-1-(5-phospho-D-ribosyl)imidazole-4-carboxylate + L-aspartate + ATP = (2S)-2-[5-amino-1-(5-phospho-beta-D-ribosyl)imidazole-4-carboxamido]succinate + ADP + phosphate + 2 H(+). It functions in the pathway purine metabolism; IMP biosynthesis via de novo pathway; 5-amino-1-(5-phospho-D-ribosyl)imidazole-4-carboxamide from 5-amino-1-(5-phospho-D-ribosyl)imidazole-4-carboxylate: step 1/2. The sequence is that of Phosphoribosylaminoimidazole-succinocarboxamide synthase from Mycobacterium ulcerans (strain Agy99).